Reading from the N-terminus, the 79-residue chain is Sulfur carrier protein TusA (79 aa).

Catalysis depends on C17, which acts as the Cysteine persulfide intermediate.

Belongs to the sulfur carrier protein TusA family.

The protein resides in the cytoplasm. Its function is as follows. Sulfur carrier protein which probably makes part of a sulfur-relay system. The polypeptide is Sulfur carrier protein TusA (Haemophilus influenzae (strain ATCC 51907 / DSM 11121 / KW20 / Rd)).